The sequence spans 307 residues: tRNA N6-adenosine threonylcarbamoyltransferase (307 aa).

Residues His108 and His112 each contribute to the Fe cation site. Residues 131–135 (IVSGG), Asp164, Gly177, Asp181, and Asn266 contribute to the substrate site. Asp290 is a Fe cation binding site.

The protein belongs to the KAE1 / TsaD family. Fe(2+) serves as cofactor.

The protein resides in the cytoplasm. The catalysed reaction is L-threonylcarbamoyladenylate + adenosine(37) in tRNA = N(6)-L-threonylcarbamoyladenosine(37) in tRNA + AMP + H(+). Its function is as follows. Required for the formation of a threonylcarbamoyl group on adenosine at position 37 (t(6)A37) in tRNAs that read codons beginning with adenine. Is involved in the transfer of the threonylcarbamoyl moiety of threonylcarbamoyl-AMP (TC-AMP) to the N6 group of A37, together with TsaE and TsaB. TsaD likely plays a direct catalytic role in this reaction. The chain is tRNA N6-adenosine threonylcarbamoyltransferase from Mycoplasmopsis synoviae (strain 53) (Mycoplasma synoviae).